Reading from the N-terminus, the 372-residue chain is Cytochrome b (372 aa).

Transmembrane regions (helical) follow at residues 25 to 45, 69 to 90, 105 to 125, and 170 to 190; these read FGSM…FLAI, WTMQ…YIHI, WLSG…GYVL, and FFAL…IHII. Residues H75 and H89 each coordinate heme b. Heme b contacts are provided by H174 and H188. H193 provides a ligand contact to a ubiquinone. The next 4 membrane-spanning stretches (helical) occupy residues 218–238, 280–300, 312–332, and 339–358; these read YKDI…MAFA, LGGT…PFTH, LAQM…WTAT, and FILI…IINP.

It belongs to the cytochrome b family. As to quaternary structure, the cytochrome bc1 complex contains 3 respiratory subunits (MT-CYB, CYC1 and UQCRFS1), 2 core proteins (UQCRC1 and UQCRC2) and probably 6 low-molecular weight proteins. Requires heme b as cofactor.

It localises to the mitochondrion inner membrane. In terms of biological role, component of the ubiquinol-cytochrome c reductase complex (complex III or cytochrome b-c1 complex) that is part of the mitochondrial respiratory chain. The b-c1 complex mediates electron transfer from ubiquinol to cytochrome c. Contributes to the generation of a proton gradient across the mitochondrial membrane that is then used for ATP synthesis. The chain is Cytochrome b (MT-CYB) from Acanthophis antarcticus (Common death adder).